The sequence spans 57 residues: Defensin-like protein 302 (57 aa).

3 disulfides stabilise this stretch: Cys-19/Cys-39, Cys-26/Cys-44, and Cys-32/Cys-46.

This sequence belongs to the DEFL family.

The chain is Defensin-like protein 302 from Arabidopsis thaliana (Mouse-ear cress).